The following is a 571-amino-acid chain: Phosphatidylinositol-3,5-bisphosphate 3-phosphatase MTMR2 (571 aa).

Residues 1–67 (MEEPPLLPGE…GVINRVEKIG (67 aa)) form the GRAM domain. Positions 133-508 (GWKVYDPIWE…RHLELWVGYY (376 aa)) constitute a Myotubularin phosphatase domain. Asn258, Asn283, and Ile284 together coordinate a 1,2-diacyl-sn-glycero-3-phospho-(1D-myo-inositol-3,5-bisphosphate). Residues Asn258, Asn283, and Ile284 each coordinate a 1,2-diacyl-sn-glycero-3-phospho-(1D-myo-inositol-3-phosphate). Catalysis depends on Cys345, which acts as the Phosphocysteine intermediate. 8 residues coordinate a 1,2-diacyl-sn-glycero-3-phospho-(1D-myo-inositol-3,5-bisphosphate): Ser346, Asp347, Gly348, Trp349, Asp350, Arg351, Arg387, and Arg391. A 1,2-diacyl-sn-glycero-3-phospho-(1D-myo-inositol-3-phosphate) is bound by residues Ser346, Asp347, Gly348, Trp349, Asp350, and Arg351. Arg391 lines the a 1,2-diacyl-sn-glycero-3-phospho-(1D-myo-inositol-3-phosphate) pocket. Residues 521–553 (VHNRYKELLAKRAELQKKVEELQREITNRSTSS) are a coiled coil. A disordered region spans residues 544-571 (REITNRSTSSSERAGSPAQCVTPVQTVV).

Belongs to the protein-tyrosine phosphatase family. Non-receptor class myotubularin subfamily. As to quaternary structure, homooligomer and heterooligomer.

It localises to the cytoplasm. Its subcellular location is the early endosome membrane. It carries out the reaction a 1,2-diacyl-sn-glycero-3-phospho-(1D-myo-inositol-3,5-bisphosphate) + H2O = a 1,2-diacyl-sn-glycero-3-phospho-(1D-myo-inositol-5-phosphate) + phosphate. The enzyme catalyses a 1,2-diacyl-sn-glycero-3-phospho-(1D-myo-inositol-3-phosphate) + H2O = a 1,2-diacyl-sn-glycero-3-phospho-(1D-myo-inositol) + phosphate. The catalysed reaction is 1,2-dioctanoyl-sn-glycero-3-phospho-(1-D-myo-inositol-3-phosphate) + H2O = 1,2-dioctanoyl-sn-glycero-3-phospho-(1D-myo-inositol) + phosphate. It catalyses the reaction 1,2-dioctanoyl-sn-glycero-3-phospho-(1D-myo-inositol-3,5-bisphosphate) + H2O = 1,2-dioctanoyl-sn-glycero-3-phospho-(1D-myo-inositol-5-phosphate) + phosphate. Lipid phosphatase that specifically dephosphorylates the D-3 position of phosphatidylinositol 3-phosphate and phosphatidylinositol 3,5-bisphosphate, generating phosphatidylinositol and phosphatidylinositol 5-phosphate. Regulates the level of these phosphoinositides critical for various biological processes including autophagy initiation and autophagosome maturation. The protein is Phosphatidylinositol-3,5-bisphosphate 3-phosphatase MTMR2 of Gallus gallus (Chicken).